We begin with the raw amino-acid sequence, 156 residues long: Protein LlR18B (156 aa).

2 residues coordinate trans-zeatin: Asp-8 and Asp-28. Ca(2+)-binding residues include Pro-32 and Ile-38. Trans-zeatin is bound by residues Lys-54, Glu-133, and Lys-136.

The protein belongs to the BetVI family. In terms of tissue distribution, ubiquitous, with higher levels in roots.

It is found in the cytoplasm. Its subcellular location is the cytosol. Functionally, class II ribonuclease (RNase), with low activity on single-strand RNA. Binds to cytokinins. Interacts with melatonin. The sequence is that of Protein LlR18B (LLR18B) from Lupinus luteus (European yellow lupine).